The chain runs to 132 residues: MSKIDTIIEMIEGLNVLELVELKKKMEEKWGVTAAAPVMAMGVAAPVAAAGDGAAAAAPAEEKTEFDVILKEAGPNKIQVIKVVRELTSLGLKEAKDLVEGAPKPVREGVSKEEAEAAKAKLTEVGAVVEIK.

Belongs to the bacterial ribosomal protein bL12 family. As to quaternary structure, homodimer. Part of the ribosomal stalk of the 50S ribosomal subunit. Forms a multimeric L10(L12)X complex, where L10 forms an elongated spine to which 2 to 4 L12 dimers bind in a sequential fashion. Binds GTP-bound translation factors.

Forms part of the ribosomal stalk which helps the ribosome interact with GTP-bound translation factors. Is thus essential for accurate translation. The protein is Large ribosomal subunit protein bL12 of Chloroflexus aggregans (strain MD-66 / DSM 9485).